The primary structure comprises 149 residues: Large ribosomal subunit protein bL9 (149 aa).

The protein belongs to the bacterial ribosomal protein bL9 family.

In terms of biological role, binds to the 23S rRNA. The protein is Large ribosomal subunit protein bL9 of Helicobacter acinonychis (strain Sheeba).